A 513-amino-acid chain; its full sequence is Sodium/potassium/calcium exchanger 5 (513 aa).

Positions 1–35 (MRTDVFLQRRKRRDVLLSIIALLLLIFAIVHLVFC) are cleaved as a signal peptide. Topologically, residues 36-78 (AGLSFQGSSSARVRRDLENASECVQPQSSEFPEGFFTVQERKD) are extracellular. The helical transmembrane segment at 79-99 (GGILIYFMIIFYMLLSVSIVC) threads the bilayer. Topologically, residues 100–123 (DEYFLPSLEVISERLGLSQDVAGA) are cytoplasmic. The helical transmembrane segment at 124–144 (TFMAAGSSAPELVTAFLGVFV) threads the bilayer. Over 145-148 (TKGD) the chain is Extracellular. The chain crosses the membrane as a helical span at residues 149-169 (IGVSTIMGSAVYNLLCICAAC). Residues 170-181 (GLLSSAVGRLSC) are Cytoplasmic-facing. A helical membrane pass occupies residues 182–202 (WPLFRDCVAYAISVAAVIAII). Topologically, residues 203 to 207 (SDNRV) are extracellular. A helical membrane pass occupies residues 208 to 228 (YWYDGACLLLVYGVYVAVLCF). Residues 229-315 (DLRISEYVMQ…KSVFSMPDHD (87 aa)) are Cytoplasmic-facing. The chain crosses the membrane as a helical span at residues 316 to 336 (LKRILWVLSLPVSTLLFVSVP). The Extracellular segment spans residues 337-350 (DCRRPFWKNFYMLT). The helical transmembrane segment at 351–371 (FLMSAVWISAFTYVLVWMVTI) threads the bilayer. The Cytoplasmic portion of the chain corresponds to 372–381 (VGETLGIPDT). Residues 382–402 (VMGMTLLAAGTSIPDTVASVM) traverse the membrane as a helical segment. Topologically, residues 403–420 (VAREGKSDMAMSNIVGSN) are extracellular. A helical transmembrane segment spans residues 421–441 (VFDMLCLGLPWFIQTVFVDVG). The Cytoplasmic portion of the chain corresponds to 442–450 (SPVEVNSSG). A helical transmembrane segment spans residues 451–471 (LVFMSCTLLLSIIFLFLAVHI). Over 472 to 482 (NGWKLDWKLGL) the chain is Extracellular. The helical transmembrane segment at 483-503 (VCLACYILFATLSILYELGII) threads the bilayer. Over 504–513 (GNNPIRSCSD) the chain is Cytoplasmic.

This sequence belongs to the Ca(2+):cation antiporter (CaCA) (TC 2.A.19) family. SLC24A subfamily. In terms of tissue distribution, highly expressed in melanin-producing cells. Colocalizes with melanin biosynthesis marker dct.

It localises to the golgi apparatus. The protein resides in the trans-Golgi network membrane. Its subcellular location is the melanosome. The catalysed reaction is Ca(2+)(out) + K(+)(out) + 4 Na(+)(in) = Ca(2+)(in) + K(+)(in) + 4 Na(+)(out). Its function is as follows. Calcium, potassium:sodium antiporter that transports 1 Ca(2+) and 1 K(+) to the melanosome in exchange for 4 cytoplasmic Na(+). Involved in pigmentation, possibly by participating in ion transport in melanosomes. Predominant sodium-calcium exchanger in melanocytes. The chain is Sodium/potassium/calcium exchanger 5 (slc24a5) from Danio rerio (Zebrafish).